A 254-amino-acid polypeptide reads, in one-letter code: 5'-methylthioadenosine/S-adenosylhomocysteine nucleosidase (254 aa).

An N-acetylmethionine modification is found at Met1. Catalysis depends on Glu25, which acts as the Proton acceptor. S-methyl-5'-thioadenosine is bound by residues Thr103 and 186 to 189 (KDME). Residues Lys186 and Asp212 each coordinate adenine. Catalysis depends on Asp212, which acts as the Proton donor.

The protein belongs to the PNP/UDP phosphorylase family. MtnN subfamily. In terms of assembly, homodimer.

The catalysed reaction is S-methyl-5'-thioadenosine + H2O = 5-(methylsulfanyl)-D-ribose + adenine. The enzyme catalyses S-adenosyl-L-homocysteine + H2O = S-(5-deoxy-D-ribos-5-yl)-L-homocysteine + adenine. It catalyses the reaction 5'-deoxyadenosine + H2O = 5-deoxy-D-ribose + adenine. It functions in the pathway amino-acid biosynthesis; L-methionine biosynthesis via salvage pathway; S-methyl-5-thio-alpha-D-ribose 1-phosphate from S-methyl-5'-thioadenosine (hydrolase route): step 1/2. Its function is as follows. Enzyme of the methionine cycle that catalyzes the irreversible cleavage of the glycosidic bond in 5'-methylthioadenosine (MTA) and S-adenosylhomocysteine (SAH/AdoHcy) to a lesser extent, to adenine and the corresponding thioribose, 5'-methylthioribose and S-ribosylhomocysteine, respectively. Contributes to the maintenance of AdoMet homeostasis and is required to sustain high rates of ethylene synthesis. The chain is 5'-methylthioadenosine/S-adenosylhomocysteine nucleosidase (MTN2) from Arabidopsis thaliana (Mouse-ear cress).